We begin with the raw amino-acid sequence, 479 residues long: Glutamate--tRNA ligase (479 aa).

The short motif at 21-31 (PSPTGYLHVGG) is the 'HIGH' region element. The 'KMSKS' region signature appears at 248–252 (KLSKR). K251 provides a ligand contact to ATP.

It belongs to the class-I aminoacyl-tRNA synthetase family. Glutamate--tRNA ligase type 1 subfamily. Monomer.

The protein localises to the cytoplasm. It carries out the reaction tRNA(Glu) + L-glutamate + ATP = L-glutamyl-tRNA(Glu) + AMP + diphosphate. In terms of biological role, catalyzes the attachment of glutamate to tRNA(Glu) in a two-step reaction: glutamate is first activated by ATP to form Glu-AMP and then transferred to the acceptor end of tRNA(Glu). This chain is Glutamate--tRNA ligase, found in Actinobacillus pleuropneumoniae serotype 7 (strain AP76).